We begin with the raw amino-acid sequence, 423 residues long: F-box/LRR-repeat protein 2 (423 aa).

In terms of domain architecture, F-box spans 9 to 55 (GLINKKLPKELLLRIFSFLDIVTLCRCAQISKAWNILALDGSNWQRI). 13 LRR repeats span residues 61–87 (QTDVEGRVVENISKRCGGFLRKLSLRG), 88–113 (CIGVGDSSLKTFAQNCRNIEHLNLNG), 114–139 (CTKITDSTCYSLSRFCSKLKHLDLTS), 140–165 (CVSITNSSLKGISEGCRNLEYLNLSW), 166–191 (CDQITKDGIEALVRGCRGLKALLLRG), 192–217 (CTQLEDEALKHIQNYCHELVSLNLQS), 218–243 (CSRITDEGVVQICRGCHRLQALCLSG), 244–269 (CSNLTDASLTALGLNCPRLQILEAAR), 270–295 (CSHLTDAGFTLLARNCHELEKMDLEE), 296–321 (CILITDSTLIQLSIHCPKLQALSLSH), 322–350 (CELITDDGILHLSNSTCGHERLRVLELDN), 351–375 (CLLITDVALEHLENCRGLERLELYD), and 376–401 (CQQVTRAGIKRMRAQLPHVKVHAYFA). Positions 80–90 (LRKLSLRGCIG) are interaction with Calmodulin. Lys-201 participates in a covalent cross-link: Glycyl lysine isopeptide (Lys-Gly) (interchain with G-Cter in ubiquitin). Thr-404 bears the Phosphothreonine mark. The S-geranylgeranyl cysteine moiety is linked to residue Cys-420. A CAAX motif motif is present at residues 420–423 (CVIL).

Part of the SCF (SKP1-CUL1-F-box) E3 ubiquitin-protein ligase complex SCF(FBXL2) composed of CUL1, SKP1, RBX1 and FBXL2. Interacts with calmodulin; may antagonize substrate ubiquitination by SCF(FBXL2). May interact with PIK3R1. Interacts with PTPN13. In terms of assembly, (Microbial infection) Interacts with hepatitis C virus non-structural protein 5A (NS5A) and less efficiently, with hepatitis C virus non-structural protein 5B (NS5B); a reaction crucial for hepatitis C virus RNA replication. In terms of processing, phosphorylated by GSK-beta (GSK3B), promoting recognition by FBXO3, leading to its ubiquitination by the SCF(FBXO3) complex. Ubiquitinated at Lys-201 by the SCF(FBXO3) complex in response to lipopolysaccharide (LPS), leading to its degradation by the proteasome. Expressed in brain, heart, kidney, liver, lung, pancreas and placenta.

It localises to the membrane. It participates in protein modification; protein ubiquitination. Calcium-activated substrate recognition component of the SCF (SKP1-cullin-F-box protein) E3 ubiquitin-protein ligase complex, SCF(FBXL2), which mediates the ubiquitination and subsequent proteasomal degradation of target proteins. Unlike many F-box proteins, FBXL2 does not seem to target phosphodegron within its substrates but rather calmodulin-binding motifs and is thereby antagonized by calmodulin. This is the case for the cyclins CCND2 and CCND3 which polyubiquitination and subsequent degradation are inhibited by calmodulin. Through CCND2 and CCND3 degradation induces cell-cycle arrest in G(0). SCF(FBXL2) also mediates PIK3R2 ubiquitination and proteasomal degradation thereby regulating phosphatidylinositol 3-kinase signaling and autophagy. PCYT1A monoubiquitination by SCF(FBXL2) and subsequent degradation regulates synthesis of phosphatidylcholine, which is utilized for formation of membranes and of pulmonary surfactant. The SCF(FBXL2) complex acts as a regulator of inflammation by mediating ubiquitination and degradation of TRAF proteins (TRAF1, TRAF2, TRAF3, TRAF4, TRAF5 and TRAF6). The SCF(FBXL2) complex acts as a negative regulator of the NLRP3 inflammasome by mediating ubiquitination and degradation of NLRP3. This Homo sapiens (Human) protein is F-box/LRR-repeat protein 2.